The following is a 304-amino-acid chain: Quinolinate synthase (304 aa).

Residues His23 and Ser40 each contribute to the iminosuccinate site. Residue Cys85 coordinates [4Fe-4S] cluster. Residues 111 to 113 and Ser128 each bind iminosuccinate; that span reads YVN. Residue Cys171 participates in [4Fe-4S] cluster binding. Residues 197–199 and Thr214 each bind iminosuccinate; that span reads HPE. Position 259 (Cys259) interacts with [4Fe-4S] cluster.

It belongs to the quinolinate synthase family. Type 2 subfamily. Requires [4Fe-4S] cluster as cofactor.

The protein resides in the cytoplasm. It carries out the reaction iminosuccinate + dihydroxyacetone phosphate = quinolinate + phosphate + 2 H2O + H(+). It functions in the pathway cofactor biosynthesis; NAD(+) biosynthesis; quinolinate from iminoaspartate: step 1/1. In terms of biological role, catalyzes the condensation of iminoaspartate with dihydroxyacetone phosphate to form quinolinate. This chain is Quinolinate synthase, found in Pelobacter propionicus (strain DSM 2379 / NBRC 103807 / OttBd1).